Here is a 621-residue protein sequence, read N- to C-terminus: MBT domain-containing protein 1 (621 aa).

Over residues 1 to 21 (MEKTKDPADRSSRSERKRRDS) the composition is skewed to basic and acidic residues. The interval 1 to 55 (MEKTKDPADRSSRSERKRRDSFGMFDGYDSCSEDTSSSSSSDESEEEVAPLPSSL) is disordered. Over residues 29-41 (DSCSEDTSSSSSS) the composition is skewed to low complexity. The segment at 68 to 103 (PDGKSGMATCEMCGMVGVRDAFYSKTKRFCSVSCSR) adopts an FCS-type zinc-finger fold. Positions 77, 80, 97, and 101 each coordinate Zn(2+). MBT repeat units follow at residues 164 to 268 (FSWG…LVPP), 276 to 373 (TNWK…IGHR), 374 to 479 (FKRT…LTPP), and 487 to 583 (FKWF…LQPP). Residues 581–621 (QPPAPQSNKDGQSNVSKQKKKSKSQPYKGHKKNFRKPGNRP) are disordered. A compositionally biased stretch (basic residues) spans 597-621 (KQKKKSKSQPYKGHKKNFRKPGNRP).

As to quaternary structure, monomer. Component of the NuA4 histone acetyltransferase complex.

The protein resides in the nucleus. Its subcellular location is the chromosome. Its function is as follows. Chromatin reader component of the NuA4 histone acetyltransferase complex, a multiprotein complex involved in transcriptional activation of select genes principally by acetylation of nucleosomal histones H4 and H2A. The NuA4 complex plays a direct role in repair of DNA double-strand breaks (DSBs) by promoting homologous recombination (HR). MBTD1 specifically recognizes and binds monomethylated and dimethylated 'Lys-20' on histone H4 (H4K20me1 and H4K20me2, respectively). In the NuA4 complex, MBTD1 promotes recruitment of the complex to H4K20me marks by competing with TP53BP1 for binding to H4K20me. Following recruitment to H4K20me at DNA breaks, the NuA4 complex catalyzes acetylation of 'Lys-15' on histone H2A (H2AK15), blocking the ubiquitination mark required for TP53BP1 localization at DNA breaks, thereby promoting homologous recombination (HR). The sequence is that of MBT domain-containing protein 1 from Xenopus laevis (African clawed frog).